Reading from the N-terminus, the 398-residue chain is Alpha-2,8-sialyltransferase 8F (398 aa).

At 1–3 the chain is on the cytoplasmic side; that stretch reads MRP. The helical; Signal-anchor for type II membrane protein transmembrane segment at 4–24 threads the bilayer; it reads GGALLALLASLLLLLLLRLLW. The Lumenal segment spans residues 25 to 398; that stretch reads CPADAPGRAR…KLQFSKCEVA (374 aa). 4 N-linked (GlcNAc...) asparagine glycosylation sites follow: Asn-66, Asn-93, Asn-151, and Asn-196. 2 disulfide bridges follow: Cys-186–Cys-335 and Cys-200–Cys-395. Residues Asn-214, 236–238, and 322–324 each bind substrate; these read NPS and STG. His-370 (proton donor/acceptor) is an active-site residue.

It belongs to the glycosyltransferase 29 family.

The protein resides in the golgi apparatus membrane. The catalysed reaction is a ganglioside GM3 + CMP-N-acetyl-beta-neuraminate = a ganglioside GD3 + CMP + H(+). It catalyses the reaction a ganglioside GM3 (d18:1(4E)) + CMP-N-acetyl-beta-neuraminate = a ganglioside GD3 (d18:1(4E)) + CMP + H(+). It carries out the reaction a ganglioside GD1a (d18:1(4E)) + CMP-N-acetyl-beta-neuraminate = a ganglioside GT1a (d18:1(4E)) + CMP + H(+). The enzyme catalyses a ganglioside GD1a + CMP-N-acetyl-beta-neuraminate = a ganglioside GT1a + CMP + H(+). The catalysed reaction is a ganglioside GM1b (d18:1(4E)) + CMP-N-acetyl-beta-neuraminate = a ganglioside GD1c (d18:1(4E)) + CMP + H(+). It catalyses the reaction a ganglioside GM1b + CMP-N-acetyl-beta-neuraminate = a ganglioside GD1c + CMP + H(+). It carries out the reaction a ganglioside GM4 (d18:1(4E)) + CMP-N-acetyl-beta-neuraminate = an N-acetyl-alpha-neuraminosyl-(2-&gt;8)-N-acetyl-alpha-neuraminosyl-(2-&gt;3)-beta-D-galactosyl-(1&lt;-&gt;1')-N-acylsphing-4-enine + CMP + H(+). The enzyme catalyses N-acetyl-alpha-neuraminosyl-(2-&gt;3)-beta-D-galactosyl-(1&lt;-&gt;1')-ceramide + CMP-N-acetyl-beta-neuraminate = N-acetyl-alpha-neuraminosyl-(2-&gt;8)-N-acetyl-alpha-neuraminosyl-(2-&gt;3)-beta-D-galactosyl-(1&lt;-&gt;1')-ceramide + CMP + H(+). The catalysed reaction is a ganglioside GT1b (d18:1(4E)) + CMP-N-acetyl-beta-neuraminate = a ganglioside GQ1b (d18:1(4E)) + CMP + H(+). It catalyses the reaction a ganglioside GT1b + CMP-N-acetyl-beta-neuraminate = a ganglioside GQ1b + CMP + H(+). Its pathway is protein modification; protein glycosylation. Its function is as follows. Alpha-2,8-sialyltransferase that prefers O-glycans to N-glycans or glycolipids as acceptor substrates. The minimal acceptor substrate is the NeuAc-alpha-2,3(6)-Gal sequence at the non-reducing end of their carbohydrate groups. The chain is Alpha-2,8-sialyltransferase 8F from Homo sapiens (Human).